We begin with the raw amino-acid sequence, 425 residues long: Gamma-glutamyl phosphate reductase (425 aa).

Belongs to the gamma-glutamyl phosphate reductase family.

It is found in the cytoplasm. It catalyses the reaction L-glutamate 5-semialdehyde + phosphate + NADP(+) = L-glutamyl 5-phosphate + NADPH + H(+). It participates in amino-acid biosynthesis; L-proline biosynthesis; L-glutamate 5-semialdehyde from L-glutamate: step 2/2. In terms of biological role, catalyzes the NADPH-dependent reduction of L-glutamate 5-phosphate into L-glutamate 5-semialdehyde and phosphate. The product spontaneously undergoes cyclization to form 1-pyrroline-5-carboxylate. This is Gamma-glutamyl phosphate reductase from Opitutus terrae (strain DSM 11246 / JCM 15787 / PB90-1).